Reading from the N-terminus, the 201-residue chain is Recombination protein RecR (201 aa).

A C4-type zinc finger spans residues 60 to 75; the sequence is CKTCGNIDTQNPCTVC. Residues 83-178 form the Toprim domain; sequence SIIVVVADVA…KVTRLAHGVP (96 aa).

The protein belongs to the RecR family.

May play a role in DNA repair. It seems to be involved in an RecBC-independent recombinational process of DNA repair. It may act with RecF and RecO. The polypeptide is Recombination protein RecR (Rhodopseudomonas palustris (strain HaA2)).